Here is a 460-residue protein sequence, read N- to C-terminus: Dynactin subunit 4 (460 aa).

At Ala-2 the chain carries N-acetylalanine. Residues 152–172 (QQLAQKEKVERDRKKLARRRN) are a coiled coil. Position 196 is a phosphoserine (Ser-196). Lys-215 is covalently cross-linked (Glycyl lysine isopeptide (Lys-Gly) (interchain with G-Cter in SUMO2)). A Phosphothreonine modification is found at Thr-407.

Belongs to the dynactin subunit 4 family. As to quaternary structure, subunit of dynactin, a multiprotein complex part of a tripartite complex with dynein and a adapter, such as BICDL1, BICD2 or HOOK3. The dynactin complex is built around ACTR1A/ACTB filament and consists of an actin-related filament composed of a shoulder domain, a pointed end and a barbed end. Its length is defined by its flexible shoulder domain. The soulder is composed of 2 DCTN1 subunits, 4 DCTN2 and 2 DCTN3. The 4 DCNT2 (via N-terminus) bind the ACTR1A filament and act as molecular rulers to determine the length. The pointed end is important for binding dynein-dynactin cargo adapters. Consists of 4 subunits: ACTR10, DCNT4, DCTN5 and DCTN6. The barbed end is composed of a CAPZA1:CAPZB heterodimers, which binds ACTR1A/ACTB filament and dynactin and stabilizes dynactin. Interacts with ATP7B, but not ATP7A, in a copper-dependent manner. Interacts with ANK2; this interaction is required for localization at costameres. Interacts with N4BP2L1.

It localises to the cytoplasm. It is found in the cytoskeleton. The protein localises to the microtubule organizing center. The protein resides in the centrosome. Its subcellular location is the stress fiber. It localises to the cell cortex. It is found in the myofibril. The protein localises to the sarcomere. Its function is as follows. Part of the dynactin complex that activates the molecular motor dynein for ultra-processive transport along microtubules. This Pongo abelii (Sumatran orangutan) protein is Dynactin subunit 4 (DCTN4).